Reading from the N-terminus, the 1389-residue chain is Carboxypeptidase D (1389 aa).

The N-terminal stretch at 1-25 is a signal peptide; the sequence is MAGAARGLLWAALSLCLLPEPLRAA. Residues 26–1308 are Extracellular-facing; it reads HIKKAEAAAA…ENRIFGLPRE (1283 aa). Residues 46–383 form the Peptidase M14 1 domain; that stretch reads RYLHAAELGQ…ESLLTFIEKV (338 aa). The segment at 95–133 is disordered; that stretch reads LPEARQDGEKKKKEEEEEEEEEEGEEGGGGALPGRPQVK. Over residues 96-108 the composition is skewed to basic and acidic residues; sequence PEARQDGEKKKKE. Residues 109–120 are compositionally biased toward acidic residues; that stretch reads EEEEEEEEEGEE. His-139 and Glu-142 together coordinate Zn(2+). N-linked (GlcNAc...) asparagine glycosylation occurs at Asn-172. The disordered stretch occupies residues 188-235; sequence ERAREGDCGGGGGGGGEGGGEPGGRENSRGRDLNRSFPDQFGSAQPDL. A compositionally biased stretch (gly residues) spans 195–209; that stretch reads CGGGGGGGGEGGGEP. Basic and acidic residues predominate over residues 210–221; that stretch reads GGRENSRGRDLN. Asn-221 carries an N-linked (GlcNAc...) asparagine glycan. His-260 provides a ligand contact to Zn(2+). Glu-353 (proton donor/acceptor) is an active-site residue. Asn-402, Asn-413, Asn-432, and Asn-472 each carry an N-linked (GlcNAc...) asparagine glycan. Residues 511 to 801 enclose the Peptidase M14 2 domain; that stretch reads RHHHFSDMEI…RSLLQFIKQV (291 aa). Zn(2+) contacts are provided by His-573 and Glu-576. Residues 614–639 are disordered; the sequence is SMNPDGYEKSQEGDRGGTVGRNNSNN. The segment covering 619-628 has biased composition (basic and acidic residues); the sequence is GYEKSQEGDR. N-linked (GlcNAc...) asparagine glycosylation occurs at Asn-635. His-680 serves as a coordination point for Zn(2+). Glu-771 acts as the Proton donor/acceptor in catalysis. Residues Asn-820, Asn-876, Asn-958, Asn-981, Asn-1073, and Asn-1151 are each glycosylated (N-linked (GlcNAc...) asparagine). One can recognise a Peptidase M14 3 domain in the interval 935 to 1220; it reads RYRPYKDLSE…KSLLSMLVEV (286 aa). Residues 1309–1329 form a helical membrane-spanning segment; the sequence is LVVTVAGASMSALVLTACIIW. 3 S-palmitoyl cysteine lipidation sites follow: Cys-1326, Cys-1330, and Cys-1332. At 1330–1389 the chain is on the cytoplasmic side; the sequence is CVCSIKSNRHKDGFPTLRQHHDDYEDEIRMMSTGSKKSLLSHEFQDETDTEEETLYSSKH. Residues 1367 to 1389 form a disordered region; that stretch reads SLLSHEFQDETDTEEETLYSSKH.

The protein belongs to the peptidase M14 family. Binds to pre-S, hepatitis B virus large envelope protein, via the carboxypeptidase-like domain. Zn(2+) is required as a cofactor. Post-translationally, the N-terminus is blocked. In terms of tissue distribution, expressed in liver, lung, kidney, heart, stomach, pancreas, spleen, gall bladder and intestine, but not in skeletal muscle.

Its subcellular location is the cell membrane. It catalyses the reaction Releases C-terminal Arg and Lys from polypeptides.. This chain is Carboxypeptidase D (CPD), found in Anas platyrhynchos (Mallard).